Here is a 479-residue protein sequence, read N- to C-terminus: Ribosomal RNA small subunit methyltransferase F (479 aa).

Residues 125–131 (AAAPGSK), E149, D176, and D194 contribute to the S-adenosyl-L-methionine site. C247 acts as the Nucleophile in catalysis.

It belongs to the class I-like SAM-binding methyltransferase superfamily. RsmB/NOP family.

The protein localises to the cytoplasm. The catalysed reaction is cytidine(1407) in 16S rRNA + S-adenosyl-L-methionine = 5-methylcytidine(1407) in 16S rRNA + S-adenosyl-L-homocysteine + H(+). In terms of biological role, specifically methylates the cytosine at position 1407 (m5C1407) of 16S rRNA. The sequence is that of Ribosomal RNA small subunit methyltransferase F (rsmF) from Escherichia coli (strain K12).